The primary structure comprises 63 residues: Large ribosomal subunit protein bL35 (63 aa).

Belongs to the bacterial ribosomal protein bL35 family.

The polypeptide is Large ribosomal subunit protein bL35 (Sulfurovum sp. (strain NBC37-1)).